The following is a 335-amino-acid chain: 2-acylglycerol O-acyltransferase 1 (335 aa).

Transmembrane regions (helical) follow at residues 24 to 44 and 104 to 124; these read WLLS…FLII and YIFG…NFCT. N-linked (GlcNAc...) asparagine glycosylation is found at Asn125 and Asn180.

This sequence belongs to the diacylglycerol acyltransferase family.

It localises to the endoplasmic reticulum membrane. It carries out the reaction a 2-acylglycerol + an acyl-CoA = a 1,2-diacylglycerol + CoA. The catalysed reaction is 2-(9Z-octadecenoyl)-glycerol + butanoyl-CoA = 1-butanoyl-2-(9Z-octadecenoyl)-glycerol + CoA. The enzyme catalyses 2-(9Z-octadecenoyl)-glycerol + octanoyl-CoA = 1-octanoyl-2-(9Z-octadecenoyl)-glycerol + CoA. It catalyses the reaction 2-(9Z-octadecenoyl)-glycerol + dodecanoyl-CoA = 1-dodecanoyl-2-(9Z-octadecenoyl)-glycerol + CoA. It carries out the reaction 2-(9Z-octadecenoyl)-glycerol + tetradecanoyl-CoA = 1-tetradecanoyl-2-(9Z-octadecenoyl)-glycerol + CoA. The catalysed reaction is 2-(9Z-octadecenoyl)-glycerol + hexadecanoyl-CoA = 1-hexadecanoyl-2-(9Z-octadecenoyl)-glycerol + CoA. The enzyme catalyses 2-(9Z-octadecenoyl)-glycerol + octadecanoyl-CoA = 1-octadecanoyl-2-(9Z-octadecenoyl)-glycerol + CoA. It catalyses the reaction eicosanoyl-CoA + 2-(9Z-octadecenoyl)-glycerol = 1-eicosanoyl-2-(9Z-octadecenoyl)-glycerol + CoA. It carries out the reaction 2-(9Z-octadecenoyl)-glycerol + (9Z)-octadecenoyl-CoA = 1,2-di-(9Z-octadecenoyl)-glycerol + CoA. The catalysed reaction is 2-(9Z-octadecenoyl)-glycerol + (9Z,12Z)-octadecadienoyl-CoA = 1-(9Z,12Z-octadecadienoyl)-2-(9Z-octadecenoyl)-glycerol + CoA. The enzyme catalyses 2-(9Z-octadecenoyl)-glycerol + (5Z,8Z,11Z,14Z)-eicosatetraenoyl-CoA = 1-(5Z,8Z,11Z,14Z-eicosatetraenoyl)-2-(9Z-octadecenoyl)-glycerol + CoA. It catalyses the reaction a 2-acylglycerol + an acyl-CoA = a 1,2-diacyl-sn-glycerol + CoA. It carries out the reaction a 2-acylglycerol + an acyl-CoA = a 2,3-diacyl-sn-glycerol + CoA. The catalysed reaction is a 1-acylglycerol + an acyl-CoA = a 1,2-diacylglycerol + CoA. The enzyme catalyses 1-dodecanoylglycerol + (9Z)-octadecenoyl-CoA = 1-dodecanoyl-2-(9Z-octadecenoyl)-glycerol + CoA. It catalyses the reaction 1-tetradecanoylglycerol + (9Z)-octadecenoyl-CoA = 1-tetradecanoyl-2-(9Z-octadecenoyl)-glycerol + CoA. It carries out the reaction 1-hexadecanoylglycerol + (9Z)-octadecenoyl-CoA = 1-hexadecanoyl-2-(9Z-octadecenoyl)-glycerol + CoA. The catalysed reaction is 1-(9Z-octadecenoyl)-glycerol + (9Z)-octadecenoyl-CoA = 1,2-di-(9Z-octadecenoyl)-glycerol + CoA. The enzyme catalyses 1-(9Z,12Z-octadecadienoyl)-glycerol + (9Z)-octadecenoyl-CoA = 1-(9Z,12Z-octadecadienoyl)-2-(9Z-octadecenoyl)-glycerol + CoA. It catalyses the reaction 1-(9Z,12Z,15Z-octadecatrienoyl)-glycerol + (9Z)-octadecenoyl-CoA = 1-(9Z,12Z,15Z-octadecatrienoyl)-2-(9Z-octadecenoyl)-glycerol + CoA. It carries out the reaction 1-(5Z,8Z,11Z,14Z-eicosatetraenoyl)-glycerol + (9Z)-octadecenoyl-CoA = 1-(5Z,8Z,11Z,14Z-eicosatetraenoyl)-2-(9Z-octadecenoyl)-glycerol + CoA. The catalysed reaction is a 1-acylglycerol + an acyl-CoA = a 1,3-diacylglycerol + CoA. The enzyme catalyses 1-dodecanoylglycerol + (9Z)-octadecenoyl-CoA = 1-dodecanoyl-3-(9Z-octadecenoyl)-glycerol + CoA. It catalyses the reaction 1-hexadecanoylglycerol + (9Z)-octadecenoyl-CoA = 1-(9Z-octadecenoyl)-3-hexadecanoylglycerol + CoA. It carries out the reaction 1-octadecanoylglycerol + (9Z)-octadecenoyl-CoA = 1-octadecanoyl-3-(9Z-octadecenoyl)-glycerol + CoA. The catalysed reaction is 1-(9Z-octadecenoyl)-sn-glycerol + (9Z)-octadecenoyl-CoA = 1,3-di-(9Z-octadecenoyl)-glycerol + CoA. The enzyme catalyses 1-(9Z,12Z-octadecadienoyl)-glycerol + (9Z)-octadecenoyl-CoA = 1-(9Z-octadecenoyl)-3-(9Z,12Z-octadecadienoyl)-glycerol + CoA. It catalyses the reaction 1-(9Z,12Z,15Z-octadecatrienoyl)-glycerol + (9Z)-octadecenoyl-CoA = 1-(9Z,12Z,15Z-octadecatrienoyl)-3-(9Z-octadecenoyl)-glycerol + CoA. It carries out the reaction a 1-acyl-sn-glycerol + an acyl-CoA = a 1,3-diacyl-sn-glycerol + CoA. The catalysed reaction is a 3-acyl-sn-glycerol + an acyl-CoA = a 1,3-diacyl-sn-glycerol + CoA. The enzyme catalyses 3-octadecanoyl-sn-glycerol + (9Z)-octadecenoyl-CoA = 1-(9Z-octadecenoyl)-3-octadecanoyl-sn-glycerol + CoA. It participates in glycerolipid metabolism; triacylglycerol biosynthesis. Functionally, involved in glycerolipid synthesis and lipid metabolism. Catalyzes the formation of diacylglycerol, the precursor of triacylglycerol, by transferring the acyl chain of a fatty acyl-CoA to a monoacylglycerol, mainly at the sn-1 or sn-3 positions. It uses both sn-2-monoacylglycerol (2-acylglycerol) and sn-1-monoacylglycerol (1-acyl-sn-glycerol) equally well as substrates, and uses sn-3-monoacylglycerol (3-acyl-sn-glycerol) with lower efficiency. Probably not involved in absorption of dietary fat in the small intestine. In Bos taurus (Bovine), this protein is 2-acylglycerol O-acyltransferase 1 (MOGAT1).